We begin with the raw amino-acid sequence, 247 residues long: MPLLLHPAWPLLLGATLTFRALRRVLCRLPLPAHVQTDPLRTWRWHNLLVSFTHSIVSGIWALLCIWQTPEMLVEIETAWSVCGYLLVCFSAGYFIHDTVDIVVSRQTRASWEYLVHHVMAMGAFFSGIFWKRFVGGGVLTLLVEVSNIFLTLRMMMKINNAQDILLYKVNKYVNLVMYFLFRLAPQAYLTKFFLQYAGQRTLGTFLLSILLMLDVMILIYFSRLLRSDFCPERAPSRQQKDKFLTE.

The signal sequence occupies residues Met1–Cys27. Over Arg28 to His46 the chain is Extracellular. The 195-residue stretch at Leu40–Arg234 folds into the TLC domain. The chain crosses the membrane as a helical span at residues Asn47–Trp67. Over Gln68 to Cys83 the chain is Cytoplasmic. The chain crosses the membrane as a helical span at residues Gly84–Val104. At Ser105–Gly123 the chain is on the extracellular side. Positions Ala124–Val144 form an intramembrane region, helical. Residues Glu145 to Tyr173 are Extracellular-facing. The helical transmembrane segment at Val174–Phe194 threads the bilayer. At Leu195–Arg201 the chain is on the cytoplasmic side. Residues Thr202–Phe222 form a helical membrane-spanning segment. Residues Ser223–Glu247 lie on the Extracellular side of the membrane.

The protein localises to the cell membrane. Its function is as follows. Regulates the composition and fluidity of the plasma membrane. Inhibits the incorporation of membrane-fluidizing phospholipids containing omega-3 long-chain polyunsaturated fatty acids (LCPUFA) and thereby promotes membrane rigidity. Does not appear to have any effect on LCPUFA synthesis. The protein is TLC domain-containing protein 1 (Tlcd1) of Rattus norvegicus (Rat).